Here is a 154-residue protein sequence, read N- to C-terminus: Myoglobin (154 aa).

The Globin domain maps to 2–148 (VLSDGEWQLV…FRKDIAAKYK (147 aa)). Ser4 is modified (phosphoserine). His65 lines the nitrite pocket. Position 65 (His65) interacts with O2. The residue at position 68 (Thr68) is a Phosphothreonine. His94 serves as a coordination point for heme b.

The protein belongs to the globin family. As to quaternary structure, monomeric.

The protein resides in the cytoplasm. Its subcellular location is the sarcoplasm. It catalyses the reaction Fe(III)-heme b-[protein] + nitric oxide + H2O = Fe(II)-heme b-[protein] + nitrite + 2 H(+). It carries out the reaction H2O2 + AH2 = A + 2 H2O. Its function is as follows. Monomeric heme protein which primary function is to store oxygen and facilitate its diffusion within muscle tissues. Reversibly binds oxygen through a pentacoordinated heme iron and enables its timely and efficient release as needed during periods of heightened demand. Depending on the oxidative conditions of tissues and cells, and in addition to its ability to bind oxygen, it also has a nitrite reductase activity whereby it regulates the production of bioactive nitric oxide. Under stress conditions, like hypoxia and anoxia, it also protects cells against reactive oxygen species thanks to its pseudoperoxidase activity. This chain is Myoglobin, found in Balaena mysticetus (Bowhead whale).